The following is a 447-amino-acid chain: N-succinylarginine dihydrolase (447 aa).

Residues alanine 19–serine 28, asparagine 110, and histidine 137–arginine 138 each bind substrate. The active site involves glutamate 174. Arginine 214 is a binding site for substrate. Histidine 250 is a catalytic residue. Substrate-binding residues include aspartate 252 and asparagine 365. Cysteine 371 (nucleophile) is an active-site residue.

The protein belongs to the succinylarginine dihydrolase family. In terms of assembly, homodimer.

The enzyme catalyses N(2)-succinyl-L-arginine + 2 H2O + 2 H(+) = N(2)-succinyl-L-ornithine + 2 NH4(+) + CO2. It participates in amino-acid degradation; L-arginine degradation via AST pathway; L-glutamate and succinate from L-arginine: step 2/5. Functionally, catalyzes the hydrolysis of N(2)-succinylarginine into N(2)-succinylornithine, ammonia and CO(2). This Acinetobacter baumannii (strain SDF) protein is N-succinylarginine dihydrolase.